The sequence spans 224 residues: Germin-like protein 1-2 (224 aa).

The signal sequence occupies residues Met1–Ala29. Cys38 and Cys53 are disulfide-bonded. The Cupin type-1 domain maps to Asp67–Gly215. N-linked (GlcNAc...) asparagine glycosylation is present at Asn82. Residues His115, His117, Glu122, and His161 each coordinate Mn(2+). N-linked (GlcNAc...) asparagine glycosylation occurs at Asn170.

It belongs to the germin family. Oligomer (believed to be a pentamer but probably hexamer).

The protein resides in the secreted. Its subcellular location is the extracellular space. It is found in the apoplast. Functionally, may play a role in plant defense. Probably has no oxalate oxidase activity even if the active site is conserved. In Oryza sativa subsp. japonica (Rice), this protein is Germin-like protein 1-2.